Consider the following 406-residue polypeptide: Probable 4-hydroxyphenylpyruvate dioxygenase 2 (406 aa).

2 consecutive VOC domains span residues G22–R174 and E205–K363. H208, H291, and E374 together coordinate Fe cation.

It belongs to the 4HPPD family. Requires Fe cation as cofactor.

It catalyses the reaction 3-(4-hydroxyphenyl)pyruvate + O2 = homogentisate + CO2. It functions in the pathway amino-acid degradation; L-phenylalanine degradation; acetoacetate and fumarate from L-phenylalanine: step 3/6. The chain is Probable 4-hydroxyphenylpyruvate dioxygenase 2 from Aspergillus fumigatus (strain ATCC MYA-4609 / CBS 101355 / FGSC A1100 / Af293) (Neosartorya fumigata).